A 117-amino-acid chain; its full sequence is Immunoglobulin kappa variable 9-129 (117 aa).

An N-terminal signal peptide occupies residues 1–22; the sequence is MDMRAPAQVFGFLLLWFPGARC. A framework-1 region spans residues 23-45; it reads DIQMTQSPSSLSASLGERVSLTC. A disulfide bridge connects residues Cys45 and Cys110. The segment at 46-56 is complementarity-determining-1; it reads RASQDIHGYLN. The segment at 57–71 is framework-2; it reads LFQQKPGETIKHLIY. Residues 72–78 are complementarity-determining-2; sequence ETSNLDS. The segment at 79 to 110 is framework-3; the sequence is GVPKRFSGSRSGSDYSLIIGSLESEDFADYYC. Residues 111–117 form a complementarity-determining-3 region; the sequence is LQYASSP.

This chain is Immunoglobulin kappa variable 9-129, found in Mus musculus (Mouse).